Reading from the N-terminus, the 759-residue chain is MVYDNIKREIIGMLKRMPNKQADWDNDLLPTLKAMFNPKSVSNAKSQLISEGVISQEIVDGKKIITLIKDPYELQAPNVFDEEMFLAYYTDKLKEYFKHKLSTEGPEWDIFDVKEFIMHFPESGDLNDKLIEHPYEVRKSITNVYIEAYEELFNETPNVEFIHIRNPIDCRISLSELSSAHKGKLVEFRAMILQATKLKLRYAKGFYYCPKCGATKTLDLGFWDKPKEVGKSLTCPADGCDCKGLIFDEDLSGKVDFQEIKVQTPLQESIYANKHSTTVFYEFNKPKKAVYSGYVKIVGVPIVKENKNGSVGELYIHAFYIEKDDEDIEEIAKNLNEKDLELINRIAKDKNVIQKLSDYAFREVTGYDMIKRAVLLQLVSSGTNIDMRTSIHILMISDPGVGKSTLMESLIQKFPFVKKVYAVTSSGPGLVGSVVREKAEFGDSWVLKAGVLTEADGGVVCIDEFSRNKEVYDYLLGVMEQQKIEINKAGVIDAVLPARVAILAACNPRFGRFNPDLTVWEQINLPKELLDRFDLIFVIKDKIDKKKDEDIADFSIDNYNSKVRERKGKSSGKKFVINGVELNDELLLKYVLYARQIEPEISDEARKIIKEYYVSVRKMSEAKGTFGISARQLGSIIRLAVAHAKLRLSEVVKAVDAEEAIRLVDTCLKQIAYDPESGSIDIDKIAGTPKSKRDKVEKVLNIIKEISNSRDDGLAPEEEIYERAERAGLSEKEVEDAINYLKRVGDIYSPKSGYWQLMS.

An MCM domain is found at 352 to 556 (VIQKLSDYAF…KDEDIADFSI (205 aa)). 397 to 404 (SDPGVGKS) contributes to the ATP binding site.

It belongs to the MCM family.

This is an uncharacterized protein from Methanocaldococcus jannaschii (strain ATCC 43067 / DSM 2661 / JAL-1 / JCM 10045 / NBRC 100440) (Methanococcus jannaschii).